The following is a 380-amino-acid chain: Flap endonuclease 1 (380 aa).

Positions 1 to 104 (MGIHGLTKLI…AELEKRGEKR (104 aa)) are N-domain. Position 34 (Asp34) interacts with Mg(2+). Arg47 and Arg70 together coordinate DNA. The Mg(2+) site is built by Asp86, Glu158, Glu160, Asp179, and Asp181. The segment at 122–253 (NIDKFSKRLV…KRAIDLIKQH (132 aa)) is I-domain. Glu158 provides a ligand contact to DNA. The DNA site is built by Gly231 and Asp233. Asp233 serves as a coordination point for Mg(2+). The segment at 336–344 (TQGRLDSFF) is interaction with PCNA. Residues 351-380 (SSKRKEPELKGSAKKKQKTGATPGKFKKGK) form a disordered region.

This sequence belongs to the XPG/RAD2 endonuclease family. FEN1 subfamily. Interacts with PCNA. Three molecules of fen1 bind to one PCNA trimer with each molecule binding to one PCNA monomer. PCNA stimulates the nuclease activity without altering cleavage specificity. Requires Mg(2+) as cofactor. Post-translationally, phosphorylated. Phosphorylation upon DNA damage induces relocalization to the nuclear plasma.

Its subcellular location is the nucleus. It is found in the nucleolus. The protein localises to the nucleoplasm. The protein resides in the mitochondrion. Functionally, structure-specific nuclease with 5'-flap endonuclease and 5'-3' exonuclease activities involved in DNA replication and repair. During DNA replication, cleaves the 5'-overhanging flap structure that is generated by displacement synthesis when DNA polymerase encounters the 5'-end of a downstream Okazaki fragment. It enters the flap from the 5'-end and then tracks to cleave the flap base, leaving a nick for ligation. Also involved in the long patch base excision repair (LP-BER) pathway, by cleaving within the apurinic/apyrimidinic (AP) site-terminated flap. Acts as a genome stabilization factor that prevents flaps from equilibrating into structures that lead to duplications and deletions. Also possesses 5'-3' exonuclease activity on nicked or gapped double-stranded DNA, and exhibits RNase H activity. Also involved in replication and repair of rDNA and in repairing mitochondrial DNA. In Anoplopoma fimbria (Sablefish), this protein is Flap endonuclease 1 (fen1).